We begin with the raw amino-acid sequence, 413 residues long: Serine hydroxymethyltransferase (413 aa).

Residues Leu115 and 119-121 contribute to the (6S)-5,6,7,8-tetrahydrofolate site; that span reads GHL. An N6-(pyridoxal phosphate)lysine modification is found at Lys224.

This sequence belongs to the SHMT family. Homodimer. Pyridoxal 5'-phosphate is required as a cofactor.

The protein localises to the cytoplasm. It carries out the reaction (6R)-5,10-methylene-5,6,7,8-tetrahydrofolate + glycine + H2O = (6S)-5,6,7,8-tetrahydrofolate + L-serine. It functions in the pathway one-carbon metabolism; tetrahydrofolate interconversion. The protein operates within amino-acid biosynthesis; glycine biosynthesis; glycine from L-serine: step 1/1. In terms of biological role, catalyzes the reversible interconversion of serine and glycine with tetrahydrofolate (THF) serving as the one-carbon carrier. This reaction serves as the major source of one-carbon groups required for the biosynthesis of purines, thymidylate, methionine, and other important biomolecules. Also exhibits THF-independent aldolase activity toward beta-hydroxyamino acids, producing glycine and aldehydes, via a retro-aldol mechanism. The sequence is that of Serine hydroxymethyltransferase from Mycoplasma mycoides subsp. mycoides SC (strain CCUG 32753 / NCTC 10114 / PG1).